A 778-amino-acid polypeptide reads, in one-letter code: Serine/threonine-protein kinase BRSK1 (778 aa).

Residues 1-12 (MSSGSKEGGGGS) show a composition bias toward gly residues. The disordered stretch occupies residues 1-29 (MSSGSKEGGGGSPAYHLPHPHPHPPQHAQ). The 252-residue stretch at 34–285 (YRLEKTLGKG…LEQIQKHPWY (252 aa)) folds into the Protein kinase domain. ATP contacts are provided by residues 40-48 (LGKGQTGLV) and K63. The active-site Proton acceptor is D156. T189 carries the post-translational modification Phosphothreonine; by LKB1. S193 carries the post-translational modification Phosphoserine. Residues 314-356 (ELDPDVLESMASLGCFRDRERLHRELRSEEENQEKMIYYLLLD) form the UBA domain. Over residues 362–383 (PSCEDQDLPPRNDVDPPRKRVD) the composition is skewed to basic and acidic residues. The disordered stretch occupies residues 362-548 (PSCEDQDLPP…SPGGGVGGAA (187 aa)). A phosphoserine mark is found at S399, S443, S447, and S450. Over residues 430-457 (SRSVSGASTGLSSSPLSSPRSPVFSFSP) the composition is skewed to low complexity. R466, R481, R484, and R498 each carry omega-N-methylarginine. The span at 491-508 (QPPPPSARSTPLPGPPGS) shows a compositional bias: pro residues. At S508 the chain carries Phosphoserine. Positions 509 to 533 (PRSSGGTPLHSPLHTPRASPTGTPG) are enriched in low complexity. An Omega-N-methylarginine modification is found at R525. Residues T529 and T535 each carry the phosphothreonine modification. An Omega-N-methylarginine modification is found at R550. Residue T583 is modified to Phosphothreonine. 3 positions are modified to phosphoserine: S586, S587, and S601. Residues 719–778 (QPSVQALADEKNGAQTRPAGTPPRSLQPPPGRPDPDLSSSPRRGPSKDKKLLATNGTPLP) form a disordered region.

This sequence belongs to the protein kinase superfamily. CAMK Ser/Thr protein kinase family. SNF1 subfamily. It depends on Mg(2+) as a cofactor. In terms of processing, phosphorylated at Thr-189 by STK11/LKB1 in complex with STE20-related adapter-alpha (STRADA) pseudo kinase and CAB39. Not phosphorylated at Thr-189 by CaMKK2. In contrast, it is phosphorylated and activated by CaMKK1. May be inactivated via dephosphorylation of Thr-189 by PP2C. May be autophosphorylated. In terms of tissue distribution, mainly present in brain. Present in presynaptic nerve terminals (at protein level).

It localises to the cytoplasm. Its subcellular location is the nucleus. The protein localises to the cytoskeleton. It is found in the microtubule organizing center. The protein resides in the centrosome. It localises to the synapse. Its subcellular location is the presynaptic active zone. The protein localises to the cytoplasmic vesicle. It is found in the secretory vesicle. The protein resides in the synaptic vesicle. The enzyme catalyses L-seryl-[protein] + ATP = O-phospho-L-seryl-[protein] + ADP + H(+). The catalysed reaction is L-threonyl-[protein] + ATP = O-phospho-L-threonyl-[protein] + ADP + H(+). It carries out the reaction L-seryl-[tau protein] + ATP = O-phospho-L-seryl-[tau protein] + ADP + H(+). It catalyses the reaction L-threonyl-[tau protein] + ATP = O-phospho-L-threonyl-[tau protein] + ADP + H(+). Activated by phosphorylation on Thr-189 by STK11/LKB1. In terms of biological role, serine/threonine-protein kinase that plays a key role in polarization of neurons and centrosome duplication. Phosphorylates CDC25B, CDC25C, MAPT/TAU, RIMS1, TUBG1, TUBG2 and WEE1. Following phosphorylation and activation by STK11/LKB1, acts as a key regulator of polarization of cortical neurons, probably by mediating phosphorylation of microtubule-associated proteins such as MAPT/TAU at 'Thr-523' and 'Ser-573'. Also regulates neuron polarization by mediating phosphorylation of WEE1 at 'Ser-642' in postmitotic neurons, leading to down-regulate WEE1 activity in polarized neurons. Also acts as a positive regulator of centrosome duplication by mediating phosphorylation of gamma-tubulin (TUBG1 and TUBG2) at 'Ser-131', leading to translocation of gamma-tubulin and its associated proteins to the centrosome. Involved in the UV-induced DNA damage checkpoint response, probably by inhibiting CDK1 activity through phosphorylation and activation of WEE1, and inhibition of CDC25B and CDC25C. In neurons, localizes to synaptic vesicles and plays a role in neurotransmitter release, possibly by phosphorylating RIMS1. This is Serine/threonine-protein kinase BRSK1 (Brsk1) from Rattus norvegicus (Rat).